The following is an 848-amino-acid chain: Paramyosin (848 aa).

The nonhelical region stretch occupies residues 1 to 9; that stretch reads AFGSMSVAD. Residues 10–833 adopt a coiled-coil conformation; that stretch reads LGSLTRLEDK…HLIRAKHRSS (824 aa). Residues 834 to 848 form a nonhelical region region; the sequence is VVTGKNASASKIYVL.

The protein belongs to the paramyosin family. Homodimer.

Its subcellular location is the cytoplasm. It localises to the myofibril. Its function is as follows. Paramyosin is a major structural component of many thick filaments isolated from invertebrate muscles. This chain is Paramyosin, found in Dirofilaria immitis (Canine heartworm).